The chain runs to 904 residues: Myelin regulatory factor-like protein (904 aa).

The segment at 46-132 is disordered; the sequence is LQRQLPDTPP…ATCRHQTGPS (87 aa). The span at 100–117 shows a compositional bias: polar residues; it reads PSQSMAGQTHSSFQNGYP. The NDT80 DNA-binding region spans 108 to 400; sequence THSSFQNGYP…SNPGQFENDS (293 aa). The Peptidase S74 domain maps to 446–554; the sequence is SDSRVKENIQ…KLTNNLEERI (109 aa). The stretch at 538 to 575 forms a coiled coil; it reads GAVKQLCKLTNNLEERIEELEIWNKKLARLKRLSSSWK. The chain crosses the membrane as a helical span at residues 624-644; it reads LVVVLIAVMAFCALTIVALYI. The disordered stretch occupies residues 656-688; it reads NLPLSNMTSSPEPALSSTAPTSAPHTTPETTQT. The segment covering 663–688 has biased composition (low complexity); it reads TSSPEPALSSTAPTSAPHTTPETTQT.

It belongs to the MRF family.

It is found in the membrane. This chain is Myelin regulatory factor-like protein (Myrfl), found in Mus musculus (Mouse).